The sequence spans 430 residues: 3-phosphoshikimate 1-carboxyvinyltransferase (430 aa).

3-phosphoshikimate is bound by residues lysine 20, serine 21, and arginine 25. Lysine 20 serves as a coordination point for phosphoenolpyruvate. Phosphoenolpyruvate is bound by residues glycine 92 and arginine 120. Residues serine 166, glutamine 168, aspartate 312, and lysine 339 each contribute to the 3-phosphoshikimate site. Position 168 (glutamine 168) interacts with phosphoenolpyruvate. Residue aspartate 312 is the Proton acceptor of the active site. Positions 343 and 387 each coordinate phosphoenolpyruvate.

Belongs to the EPSP synthase family. As to quaternary structure, monomer.

It localises to the cytoplasm. The enzyme catalyses 3-phosphoshikimate + phosphoenolpyruvate = 5-O-(1-carboxyvinyl)-3-phosphoshikimate + phosphate. It functions in the pathway metabolic intermediate biosynthesis; chorismate biosynthesis; chorismate from D-erythrose 4-phosphate and phosphoenolpyruvate: step 6/7. In terms of biological role, catalyzes the transfer of the enolpyruvyl moiety of phosphoenolpyruvate (PEP) to the 5-hydroxyl of shikimate-3-phosphate (S3P) to produce enolpyruvyl shikimate-3-phosphate and inorganic phosphate. The polypeptide is 3-phosphoshikimate 1-carboxyvinyltransferase (Lactococcus lactis subsp. lactis (strain IL1403) (Streptococcus lactis)).